A 225-amino-acid chain; its full sequence is MLLHIPDILSADQVADFRRRLDAADWTDGRETVGHLGAQAKHNQQLPEASPLRRELGEIILVALARHPLFFSAALPLKYLPPRFNRYSGGGTYGFHVDGAVMNLANGEQLRSDISCTLFLSAPDEYEGGELIISDTYGEHEVKLPAGDLIVYPSSSLHQVRPVTAGARVASFFWVQSMVRDDVQRRLLWEMDGSIERLRQTGGDAEAVLQLTGVYHNLLRRWSEV.

The Fe2OG dioxygenase domain occupies 78–177; the sequence is KYLPPRFNRY…RVASFFWVQS (100 aa). Fe cation contacts are provided by H96, D98, and H158. Position 168 (R168) interacts with 2-oxoglutarate.

Fe(2+) serves as cofactor. The cofactor is L-ascorbate.

In Stenotrophomonas maltophilia (strain R551-3), this protein is PKHD-type hydroxylase Smal_0990.